We begin with the raw amino-acid sequence, 581 residues long: Arginine--tRNA ligase (581 aa).

The 'HIGH' region signature appears at 126–136 (PNLAKEMHVGH).

Belongs to the class-I aminoacyl-tRNA synthetase family. As to quaternary structure, monomer.

It is found in the cytoplasm. The enzyme catalyses tRNA(Arg) + L-arginine + ATP = L-arginyl-tRNA(Arg) + AMP + diphosphate. This is Arginine--tRNA ligase from Shewanella woodyi (strain ATCC 51908 / MS32).